The chain runs to 306 residues: 4-diphosphocytidyl-2-C-methyl-D-erythritol kinase (306 aa).

Residue Lys11 is part of the active site. Residue 98-108 (PIAGGMGGGSA) participates in ATP binding. Asp140 is a catalytic residue.

It belongs to the GHMP kinase family. IspE subfamily.

It catalyses the reaction 4-CDP-2-C-methyl-D-erythritol + ATP = 4-CDP-2-C-methyl-D-erythritol 2-phosphate + ADP + H(+). It participates in isoprenoid biosynthesis; isopentenyl diphosphate biosynthesis via DXP pathway; isopentenyl diphosphate from 1-deoxy-D-xylulose 5-phosphate: step 3/6. In terms of biological role, catalyzes the phosphorylation of the position 2 hydroxy group of 4-diphosphocytidyl-2C-methyl-D-erythritol. This Leifsonia xyli subsp. xyli (strain CTCB07) protein is 4-diphosphocytidyl-2-C-methyl-D-erythritol kinase.